The following is a 238-amino-acid chain: Uracil-DNA glycosylase (238 aa).

Aspartate 81 serves as the catalytic Proton acceptor.

Belongs to the uracil-DNA glycosylase (UDG) superfamily. UNG family.

Its subcellular location is the cytoplasm. The enzyme catalyses Hydrolyzes single-stranded DNA or mismatched double-stranded DNA and polynucleotides, releasing free uracil.. Its function is as follows. Excises uracil residues from the DNA which can arise as a result of misincorporation of dUMP residues by DNA polymerase or due to deamination of cytosine. The protein is Uracil-DNA glycosylase of Corynebacterium efficiens (strain DSM 44549 / YS-314 / AJ 12310 / JCM 11189 / NBRC 100395).